Consider the following 268-residue polypeptide: Phosphate import ATP-binding protein PstB 2 (268 aa).

An ABC transporter domain is found at 19–263 (YKVRNMAFFY…PKDKRTEDYI (245 aa)). Position 51 to 58 (51 to 58 (GPSGCGKS)) interacts with ATP.

Belongs to the ABC transporter superfamily. Phosphate importer (TC 3.A.1.7) family. In terms of assembly, the complex is composed of two ATP-binding proteins (PstB), two transmembrane proteins (PstC and PstA) and a solute-binding protein (PstS).

It is found in the cell inner membrane. It carries out the reaction phosphate(out) + ATP + H2O = ADP + 2 phosphate(in) + H(+). Its function is as follows. Part of the ABC transporter complex PstSACB involved in phosphate import. Responsible for energy coupling to the transport system. The sequence is that of Phosphate import ATP-binding protein PstB 2 from Gloeobacter violaceus (strain ATCC 29082 / PCC 7421).